A 179-amino-acid polypeptide reads, in one-letter code: MARIKDKYRNEVAPAMMEKFGYKSVMQIPRLEKIIINMGLGQAKENQKELEIAVKELGIIAGQKPITTKAKKSVANFKVREGMAVGAKTTLRGEKMYEFADRLINIALPRVRDFRGVNPNSFDGRGNYALGVKEQLIFPEIEYDKVDKVRGMDIILVTTANSDEESRELLRLLGMPFTK.

This sequence belongs to the universal ribosomal protein uL5 family. Part of the 50S ribosomal subunit; part of the 5S rRNA/L5/L18/L25 subcomplex. Contacts the 5S rRNA and the P site tRNA. Forms a bridge to the 30S subunit in the 70S ribosome.

In terms of biological role, this is one of the proteins that bind and probably mediate the attachment of the 5S RNA into the large ribosomal subunit, where it forms part of the central protuberance. In the 70S ribosome it contacts protein S13 of the 30S subunit (bridge B1b), connecting the 2 subunits; this bridge is implicated in subunit movement. Contacts the P site tRNA; the 5S rRNA and some of its associated proteins might help stabilize positioning of ribosome-bound tRNAs. This chain is Large ribosomal subunit protein uL5, found in Alkaliphilus metalliredigens (strain QYMF).